Consider the following 342-residue polypeptide: Selenide, water dikinase (342 aa).

Cys13 is an active-site residue. Residues Lys16 and 44–46 (SCD) contribute to the ATP site. Mg(2+) is bound at residue Asp47. ATP contacts are provided by residues Asp64, Asp87, and 134 to 136 (GHS). Asp87 serves as a coordination point for Mg(2+). Asp222 provides a ligand contact to Mg(2+).

The protein belongs to the selenophosphate synthase 1 family. Class I subfamily. As to quaternary structure, homodimer. Mg(2+) is required as a cofactor.

It catalyses the reaction hydrogenselenide + ATP + H2O = selenophosphate + AMP + phosphate + 2 H(+). In terms of biological role, synthesizes selenophosphate from selenide and ATP. This chain is Selenide, water dikinase, found in Agathobacter rectalis (strain ATCC 33656 / DSM 3377 / JCM 17463 / KCTC 5835 / VPI 0990) (Eubacterium rectale).